A 449-amino-acid chain; its full sequence is POU domain, class 3, transcription factor 1 (449 aa).

5 disordered regions span residues 1–22 (MATT…TGPL), 76–108 (GGGG…GGGG), 132–152 (AHHL…HQPQ), 184–251 (GLHH…PSSD), and 393–449 (KRMT…GSVQ). Composition is skewed to gly residues over residues 11–20 (GPGGGAGGTG) and 93–108 (AGGG…GGGG). Residues 132–143 (AHHLGPAMSPSP) are compositionally biased toward low complexity. Residues 188-197 (ALHEDGHEAQ) are compositionally biased toward basic and acidic residues. The span at 218-230 (AGGLHAAAAHLHP) shows a compositional bias: low complexity. Residues 245–319 (EDAPSSDDLE…LLNKWLEETD (75 aa)) form the POU-specific domain. A DNA-binding region (homeobox) is located at residues 337-396 (KRKKRTSIEVGVKGALESHFLKCPKPSAHEITGLADSLQLEKEVVRVWFCNRRQKEKRMT). Positions 425–434 (PSAPPPPPPA) are enriched in pro residues.

The protein belongs to the POU transcription factor family. Class-3 subfamily.

It localises to the nucleus. Transcription factor that binds to the octamer motif (5'-ATTTGCAT-3'). Acts as a transcriptional activator when binding cooperatively with SOX4, SOX11, or SOX12 to gene promoters. Acts as a transcriptional repressor of myelin-specific genes. In Mus musculus (Mouse), this protein is POU domain, class 3, transcription factor 1 (Pou3f1).